Here is a 1169-residue protein sequence, read N- to C-terminus: Rabankyrin-5 (1169 aa).

An N-acetylalanine modification is found at Ala2. The 63-residue stretch at 68-130 folds into the BTB domain; it reads SDLKIKVGDR…IYTDELEFRE (63 aa). ANK repeat units follow at residues 217-247, 255-284, 288-317, 322-362, and 366-396; these read KTEYPLHKAIKVEREDVVFLYLIEMDSQLPG, NGDLALDLALSRRLESIATTLVSHKADVDM, SGWSLLHKGIQRGDLFAATFLIKNGAFVNA, AQET…NPNM, and KGRTPLHVSIMAGNEYVFSQLLQCKQLDLEL. Ser270 carries the phosphoserine modification. Positions 421-423 match the NPF motif; that stretch reads NPF. ANK repeat units lie at residues 490–519, 542–572, 588–617, 621–650, 654–683, 687–716, 724–753, 769–798, 802–832, 836–865, 870–899, 905–934, 938–967, 971–1001, 1005–1037, and 1043–1072; these read WGETPLHTACRHGLANLTAELLQQGANPNL, HLQTPLHMAIAYNHPDVVSVILEQKANALHA, RDQTVLGLALWTGMHTIAAQLLGSGAAIND, DGQTLLHMAIQRQDSKSALFLLEHQADINV, DGETALQLAIRNQLPLVVDAICTRGADMSV, KGNPPLWLALANNLEDIASTLVRHGCDATC, CLQTLLHRAIDENNEPTACFLIRSGCDVNS, DGQTPLHLAASWGLEETVQCLLEFGANVNA, EGRTPIHVAISSQHGVIIQLLVSHPDIHLNV, QGLTPFACAMTFKNNKSAEAILKRESGAAE, KGRNFLHVAVQNSDIESVLFLISVHANVNS, SKLTPLHLAVQAGSEIIVRNLLLAGAKVNE, HRQTALHLAAQQDLPTICSVLLENGVDFAA, NGNNALHLAVMHGRLNNIRVLLTECTVDAEA, RGQSPLHILGQYGKENAAAIFDLFLECMPGYPL, and DGSTVLLLAYMKGNANLCRAIVRSGARLGV. The tract at residues 650–759 is interaction with RHOD and RAB5A; the sequence is VRTQDGETAL…DVNSPRQPGA (110 aa). An FYVE-type zinc finger spans residues 1104–1164; that stretch reads WCDGSYCYEC…VCNICFDVLT (61 aa). The Zn(2+) site is built by Cys1110, Cys1113, Cys1126, Cys1129, Cys1134, Cys1137, Cys1156, and Cys1159.

As to quaternary structure, interacts with RAB5A (in GTP-bound form). Interacts with RHOD (independent of GTP-loaded status). Interacts with EHD1. Interacts with VPS26A; the interaction is independent of EHD1 and is indicative for an association with the cargo recognition subcomplex of the retromer complex. In terms of tissue distribution, high expression in whole adult brain and intermediate expression in all other tissues and specific brain regions examined, including fetal brain.

The protein localises to the cytoplasm. The protein resides in the endosome membrane. Its subcellular location is the early endosome. Functionally, proposed effector of Rab5. Binds to phosphatidylinositol 3-phosphate (PI(3)P). Involved in homotypic early endosome fusion and to a lesser extent in heterotypic fusion of chlathrin-coated vesicles with early endosomes. Involved in macropinocytosis; the function is dependent on Rab5-GTP. Required for correct endosomal localization. Involved in the internalization and trafficking of activated tyrosine kinase receptors such as PDGFRB. Regulates the subcellular localization of the retromer complex in a EHD1-dependent manner. Involved in endosome-to-Golgi transport and biosynthetic transport to late endosomes and lysosomes indicative for a regulation of retromer complex-mediated retrograde transport. In Homo sapiens (Human), this protein is Rabankyrin-5 (ANKFY1).